The primary structure comprises 255 residues: F-box/SPRY domain-containing protein 1 (255 aa).

An F-box domain is found at 3-51 (DPVAALCNYNVLEVIFSYLELEDLNHCSQVCKSWYHFLNDENSDVWRWH). Residues 61–253 (LKSDLLASVS…VSMVYLGTPL (193 aa)) form the B30.2/SPRY domain.

The protein belongs to the FBXO45/Fsn family. As to quaternary structure, component of an E3 ubiquitin ligase complex composed of hiw and Fsn.

The protein localises to the synapse. Its pathway is protein modification; protein ubiquitination. Required in the presynaptic motoneuron to down-regulate the levels of wnd and restrain synaptic terminal growth at the neuromuscular junction (NMJ). The sequence is that of F-box/SPRY domain-containing protein 1 from Drosophila yakuba (Fruit fly).